Consider the following 943-residue polypeptide: Receptor-like kinase TMK3 (943 aa).

Residues 1–24 form the signal peptide; sequence MSNSHLGTLCFIISLLGLANFSLS. Residues 25–482 lie on the Extracellular side of the membrane; the sequence is QTGLDDSTMQ…ETSKKSSNVK (458 aa). A glycan (N-linked (GlcNAc...) asparagine) is linked at Asn-41. Residues Cys-54 and Cys-61 are joined by a disulfide bond. LRR repeat units follow at residues 64–88, 89–111, 112–134, 136–160, 162–183, 186–210, 212–232, 233–254, 255–279, and 281–301; these read SNRV…LQSL, SELV…LSGL, SRLQ…LFSG, SSLQ…VKEA, SLQN…FFGS, LPSL…FAGT, IQSL…LGNM, TSLV…DLSG, LVSL…LVSL, and SLTT…LFGK. Residues Asn-165 and Asn-170 are each glycosylated (N-linked (GlcNAc...) asparagine). N-linked (GlcNAc...) asparagine glycans are attached at residues Asn-223 and Asn-231. The N-linked (GlcNAc...) asparagine glycan is linked to Asn-286. 2 cysteine pairs are disulfide-bonded: Cys-315–Cys-323 and Cys-353–Cys-361. LRR repeat units follow at residues 363 to 386, 387 to 410, and 411 to 438; these read GGNI…SLAK, LTSL…ELTT, and LSKL…VTLV. Residue Asn-365 is glycosylated (N-linked (GlcNAc...) asparagine). The disordered stretch occupies residues 441 to 476; it reads GNANMGKNGPNKTSDAPGASPGSKPSGGSDGSETSK. Asn-451 carries N-linked (GlcNAc...) asparagine glycosylation. Low complexity predominate over residues 454–467; that stretch reads SDAPGASPGSKPSG. Residues 483–503 form a helical membrane-spanning segment; that stretch reads IIVPVVGGVVGALCLVGLGVC. Residues 504-943 lie on the Cytoplasmic side of the membrane; the sequence is LYAKKRKRPA…ADSFTSVDGR (440 aa). The disordered stretch occupies residues 514 to 534; the sequence is RVQSPSSNMVIHPHHSGDNDD. The region spanning 585 to 866 is the Protein kinase domain; it reads FSEENILGRG…AHIVNVLSSL (282 aa). Residues 591 to 599 and Lys-613 each bind ATP; that span reads LGRGGFGTV. The active-site Proton acceptor is the Asp-714. A disordered region spans residues 904 to 943; sequence QTADDSGSSSSAYGSKDNTQTSIPTRPSGFADSFTSVDGR. The segment covering 906–918 has biased composition (low complexity); the sequence is ADDSGSSSSAYGS. Polar residues predominate over residues 919–928; it reads KDNTQTSIPT.

It belongs to the protein kinase superfamily. Ser/Thr protein kinase family. As to expression, expressed in roots, leaves, stems, siliques and flowers.

The protein localises to the membrane. It catalyses the reaction L-seryl-[protein] + ATP = O-phospho-L-seryl-[protein] + ADP + H(+). It carries out the reaction L-threonyl-[protein] + ATP = O-phospho-L-threonyl-[protein] + ADP + H(+). In terms of biological role, involved in auxin signal transduction and cell expansion and proliferation regulation. This chain is Receptor-like kinase TMK3, found in Arabidopsis thaliana (Mouse-ear cress).